The following is a 555-amino-acid chain: Protein PLASTID TRANSCRIPTIONALLY ACTIVE 12, chloroplastic (555 aa).

A chloroplast-targeting transit peptide spans 1-58 (MASCYNPWRLFPGMSTAVPAGPVTAPAHSRTCKSSKVFSALPHRRGLLFLGTRRARIK). Disordered regions lie at residues 80–100 (YFDS…SIPG), 115–167 (ARAP…EPDV), and 468–541 (SYNE…IDDS). The segment covering 144–154 (QVTSASGTEGA) has biased composition (polar residues). 2 stretches are compositionally biased toward acidic residues: residues 471 to 480 (EDSDDEDEDV) and 490 to 502 (LEDE…DVAE). Residues 508 to 519 (NQNWSALKSTGQ) show a composition bias toward polar residues. Positions 521-538 (EKPKEKSKKDEMTLKEAI) are enriched in basic and acidic residues.

As to quaternary structure, component of the plastid-encoded plastid RNA polymerase (PEP) complex.

It localises to the plastid. The protein localises to the chloroplast stroma. Its subcellular location is the nucleus. Its function is as follows. Required for the activity of the plastid-encoded RNA polymerase (PEP) and full expression of genes transcribed by PEP. Required for the proper build-up and formation of the PEP-complex. Binds single-stranded (ss) DNA and RNA, but not double-stranded (ds) DNA. In Zea mays (Maize), this protein is Protein PLASTID TRANSCRIPTIONALLY ACTIVE 12, chloroplastic.